Consider the following 170-residue polypeptide: Peptidyl-prolyl cis-trans isomerase ESS1 (170 aa).

Positions 9–43 (TGLPTPWTVRYSKSKKREYFFNPETKHSQWEEPEG) constitute a WW domain. Residues 30–53 (NPETKHSQWEEPEGTNKDQLHKHL) form a disordered region. The segment covering 32 to 53 (ETKHSQWEEPEGTNKDQLHKHL) has biased composition (basic and acidic residues). The PpiC domain occupies 57-170 (PVRVRCLHIL…SGVHVIKRVG (114 aa)). At Ser-161 the chain carries Phosphoserine.

It belongs to the PpiC/parvulin rotamase family. Interacts with the RNA polymerase II largest subunit (RPB1) and with the SIN1-RDP3 HDAC subunit SIN3.

Its subcellular location is the cytoplasm. The protein resides in the nucleus. The catalysed reaction is [protein]-peptidylproline (omega=180) = [protein]-peptidylproline (omega=0). Inhibited by 5-hydroxy-1,4-naphthoquinone (juglone), but not by FK506 or cyclosporin A. Functionally, essential PPIase specific for phosphoserine and phosphothreonine N-terminal to the proline residue. Required for efficient pre-mRNA 3'-end processing and transcription termination, probably by inducing conformational changes by proline-directed isomerization in the C-terminal domain (CTD) of RPB1, thereby altering cofactor binding with the RNA polymerase II transcription complex. Also targets the SIN3-RPD3 histone deacetylase complex (HDAC). This is Peptidyl-prolyl cis-trans isomerase ESS1 (ESS1) from Saccharomyces cerevisiae (strain ATCC 204508 / S288c) (Baker's yeast).